The chain runs to 217 residues: KS1 protein (217 aa).

A signal peptide spans 1–16 (MKLIIVLVMMLVCVYS). Over residues 24–47 (PKNHEVPAKKQFAETKVEKKKRSD) the composition is skewed to basic and acidic residues. Disordered stretches follow at residues 24–58 (PKNHEVPAKKQFAETKVEKKKRSDDGDEEICDDDD) and 72–205 (EDDD…LKIK). A run of 2 repeats spans residues 32–81 (KKQF…VDGG) and 98–147 (KKKK…YDED). A 2 X 50 AA approximate repeats region spans residues 32-147 (KKQFAETKVE…EEDDDCYDED (116 aa)). Acidic residues-rich tracts occupy residues 48–58 (DGDEEICDDDD) and 72–94 (EDDDDCVDGGETEECDEDDDDCQ). Positions 98–110 (KKKKRETKPKLKK) are enriched in basic residues. The segment covering 114–145 (DEEEEECEEDDEDCEVEVDIEECDEEDDDCYD) has biased composition (acidic residues). The span at 149-188 (KKKKENKLKKESKKKNSKKTVPKNAKKSSKRSTSTKKTSQ) shows a compositional bias: basic residues.

In terms of tissue distribution, expressed in tentacle-specific epithelial cells (battery cells) as well as in a small fraction of ectodermal epithelial cells in the gastric region subjacent to the tentacles (the tentacle formation region). The later cells are committed to become battery cells.

Functionally, responds to early signals of head formation in hydra. This Hydra vulgaris (Hydra) protein is KS1 protein (KS1).